Here is a 747-residue protein sequence, read N- to C-terminus: Protein Niban 2 (747 aa).

Glycine 2 carries the N-myristoyl glycine lipid modification. Positions 68 to 192 (RIIFSGNLFQ…WQAVLQDCVR (125 aa)) constitute a PH domain. 2 positions are modified to phosphoserine: serine 568 and serine 574. A disordered region spans residues 589-747 (WGEQYGDGGD…EDSAGVQTEF (159 aa)). Residues 593-602 (YGDGGDGSDS) show a composition bias toward gly residues. Phosphoserine occurs at positions 605, 626, 641, 645, 648, 667, 672, 683, 693, and 697. Positions 708–722 (VDLEPPKPSDQETGE) are enriched in basic and acidic residues. The span at 734 to 747 (HTTTEDSAGVQTEF) shows a compositional bias: polar residues.

This sequence belongs to the Niban family. As apoptosis proceeds, degraded via an proteasome-independent pathway, probably by caspases.

Its subcellular location is the cytoplasm. The protein localises to the cytosol. It is found in the cell junction. The protein resides in the adherens junction. It localises to the membrane. In terms of biological role, may play a role in apoptosis suppression. This chain is Protein Niban 2, found in Rattus norvegicus (Rat).